Consider the following 147-residue polypeptide: Hemoglobin subunit beta-M (147 aa).

Val-2 carries the post-translational modification N-acetylvaline. A Globin domain is found at 3-147 (HLTSEEKNCI…VAHALAHKYH (145 aa)). Position 13 is a phosphothreonine (Thr-13). Ser-45 is subject to Phosphoserine. Residue Lys-60 is modified to N6-acetyllysine. Position 64 (His-64) interacts with heme b. Lys-83 bears the N6-acetyllysine mark. His-93 contacts heme b. Cys-94 carries the S-nitrosocysteine modification. At Lys-145 the chain carries N6-acetyllysine.

Belongs to the globin family. Heterotetramer of two alpha chains and two beta chains. As to expression, red blood cells.

Involved in oxygen transport from the lung to the various peripheral tissues. The polypeptide is Hemoglobin subunit beta-M (HBB) (Didelphis virginiana (North American opossum)).